We begin with the raw amino-acid sequence, 311 residues long: MHQKLLKSAHYIELGSYQYWPVLVPRGIRLYTYEQIPVSLKDNPYITDGYRAYLPSRLCIKSLFILSNETVNIWSHLLGFFLFFTLGIYDMTSVLPSASASREDFVICSICLFCFQVCMLCSVGYHLFSCHRSEKTCRRWMALDYAGISIGILGCYVSGVFYAFYCNNYWRQVYLITVLAMILAVFFAQIHPSYLTQQWQRLRPIIFCSVSGYGVIPTLHWVWLNGGVSAPIVQDFAPRVIVMYVIALLAFLFYISKVPERYFPGQLNYLGSSHQIWHVLAVVMLYWWHQSTVYVMQYRHSKPCPDYVSHL.

The interval 1 to 20 (MHQKLLKSAHYIELGSYQYW) is required for interaction with SREBF2. Over 1 to 70 (MHQKLLKSAH…KSLFILSNET (70 aa)) the chain is Cytoplasmic. The segment at 41 to 60 (KDNPYITDGYRAYLPSRLCI) is required for interaction with SCAP. The interval 61–71 (KSLFILSNETV) is golgi targeting. A helical transmembrane segment spans residues 71–91 (VNIWSHLLGFFLFFTLGIYDM). The Lumenal portion of the chain corresponds to 92–104 (TSVLPSASASRED). A helical transmembrane segment spans residues 105-125 (FVICSICLFCFQVCMLCSVGY). At 126 to 145 (HLFSCHRSEKTCRRWMALDY) the chain is on the cytoplasmic side. The chain crosses the membrane as a helical span at residues 146–166 (AGISIGILGCYVSGVFYAFYC). Topologically, residues 167–172 (NNYWRQ) are lumenal. A helical membrane pass occupies residues 173–193 (VYLITVLAMILAVFFAQIHPS). Over 194–203 (YLTQQWQRLR) the chain is Cytoplasmic. Residues 204-224 (PIIFCSVSGYGVIPTLHWVWL) form a helical membrane-spanning segment. Residues 225 to 235 (NGGVSAPIVQD) are Lumenal-facing. A helical membrane pass occupies residues 236–256 (FAPRVIVMYVIALLAFLFYIS). The Cytoplasmic segment spans residues 257–275 (KVPERYFPGQLNYLGSSHQ). The helical transmembrane segment at 276–296 (IWHVLAVVMLYWWHQSTVYVM) threads the bilayer. Topologically, residues 297 to 311 (QYRHSKPCPDYVSHL) are lumenal. The tract at residues 299-303 (RHSKP) is golgi targeting.

It belongs to the ADIPOR family. Interacts with SCAP and SREBF2; the interactions are direct, increase in low cholesterol conditions and tether SCAP:SREBP complex to the Golgi apparatus. Interaction with SCAP is mutually exclusive with INSIG1. In hepatocytes, interacts with PPARA and HUWE1; the interactions promote PPARA poylubiquitination and HUWE1-mediated degradation. In macrophages, interacts with PPARG and STUB1; the interactions promote PPARG poylubiquitination and STUB1-mediated degradation.

Its subcellular location is the golgi apparatus membrane. Functionally, golgi-anchored protein which modulates its interactors acitivies by tethering them to the Golgi apparatus. Functions as a spatial regulator of RAF1 kinase by sequestrating it to the Golgi apparatus. Acts as a positive regulator of cholesterol biosynthesis by mediating the anchoring of the SCAP:SREBP complex in the Golgi apparatus, thereby promoting SCAP:SREBF2 complex formation, potentiating SREBF2 and SREBF1 processing and enhancing lipid synthesis. Also regulates PPARA and PPARG functions by mediating their interaction with E3 ubiquitin ligases, such as STUB1 or HUWE1, leading to their polyubiquitination and proteasome-mediated degradation. The protein is Progestin and adipoQ receptor family member 3 of Mus musculus (Mouse).